Here is a 432-residue protein sequence, read N- to C-terminus: UPF0597 protein APJL_1638 (432 aa).

This sequence belongs to the UPF0597 family.

This is UPF0597 protein APJL_1638 from Actinobacillus pleuropneumoniae serotype 3 (strain JL03).